We begin with the raw amino-acid sequence, 407 residues long: Phosphopentomutase (407 aa).

Mn(2+) is bound by residues Asp-10, Asp-306, His-311, Asp-347, His-348, and His-359.

This sequence belongs to the phosphopentomutase family. Mn(2+) is required as a cofactor.

The protein resides in the cytoplasm. It catalyses the reaction 2-deoxy-alpha-D-ribose 1-phosphate = 2-deoxy-D-ribose 5-phosphate. The enzyme catalyses alpha-D-ribose 1-phosphate = D-ribose 5-phosphate. The protein operates within carbohydrate degradation; 2-deoxy-D-ribose 1-phosphate degradation; D-glyceraldehyde 3-phosphate and acetaldehyde from 2-deoxy-alpha-D-ribose 1-phosphate: step 1/2. Functionally, isomerase that catalyzes the conversion of deoxy-ribose 1-phosphate (dRib-1-P) and ribose 1-phosphate (Rib-1-P) to deoxy-ribose 5-phosphate (dRib-5-P) and ribose 5-phosphate (Rib-5-P), respectively. The sequence is that of Phosphopentomutase from Shigella boydii serotype 18 (strain CDC 3083-94 / BS512).